A 1467-amino-acid polypeptide reads, in one-letter code: Neuropathy target esterase sws (1467 aa).

Topologically, residues 1–34 (MDVLEMLRASASGSYNTIFSDAWCQYVSKQITAT) are lumenal. The chain crosses the membrane as a helical span at residues 35–55 (MYMYCAFGLMGVLFLAWFMYF). Topologically, residues 56 to 1467 (KRLARLRLRD…RSSTYNETKN (1412 aa)) are cytoplasmic. An a nucleoside 3',5'-cyclic phosphate-binding site is contributed by 174 to 301 (IFGHFEKPIF…IRVIQVIMIR (128 aa)). Disordered regions lie at residues 332–353 (TMSGPINSQTSQSSRQATANGP) and 372–416 (MGMG…SVHG). The segment covering 339-350 (SQTSQSSRQATA) has biased composition (low complexity). Residues Ser450 and Ser459 each carry the phosphoserine modification. A nucleoside 3',5'-cyclic phosphate contacts are provided by residues 488–615 (ELGL…VVRR) and 604–731 (IVLD…LSHR). In terms of domain architecture, PNPLA spans 958–1124 (LVLGGGGARG…VNNLPGHLWR (167 aa)). A GXGXXG motif is present at residues 962–967 (GGGARG). Positions 989 to 993 (GVSIG) match the GXSXG motif. Residue Ser991 is the Nucleophile of the active site. Asp1111 serves as the catalytic Proton acceptor. The short motif at 1111–1113 (DGG) is the DGA/G element. Ser1205 carries the post-translational modification Phosphoserine. A disordered region spans residues 1377 to 1467 (RKMDKSTQST…RSSTYNETKN (91 aa)). Positions 1382 to 1393 (STQSTPPTSSRA) are enriched in polar residues. Composition is skewed to basic and acidic residues over residues 1396–1406 (RGKEEARHMDN) and 1448–1458 (LADKDEDKENR).

The protein belongs to the NTE family. Interacts with Pka-C3; interaction inhibits the catalytic function of Pka-C3 and the esterase activity of sws.

Its subcellular location is the endoplasmic reticulum membrane. The enzyme catalyses a 1-acyl-sn-glycero-3-phosphocholine + H2O = sn-glycerol 3-phosphocholine + a fatty acid + H(+). Functionally, phospholipase B that deacylates intracellular phosphatidylcholine (PtdCho), generating glycerophosphocholine (GroPtdCho). This deacylation occurs at both sn-2 and sn-1 positions of PtdCho. Its specific chemical modification by certain organophosphorus (OP) compounds leads to distal axonopathy. Plays a role in the signaling mechanism between neurons and glia that regulates glia wrapping during development of the adult brain. Essential for membrane lipid homeostasis and cell survival in both neurons and glia of the adult brain. The polypeptide is Neuropathy target esterase sws (Drosophila yakuba (Fruit fly)).